The primary structure comprises 266 residues: Probable septum site-determining protein MinC (266 aa).

The tract at residues 98 to 146 (ILKGGRPVSDVDVPKVEPESPPAEEKKKTGKATKASGKSDEIGETDSPQ) is disordered. The span at 109-124 (DVPKVEPESPPAEEKK) shows a compositional bias: basic and acidic residues.

This sequence belongs to the MinC family. As to quaternary structure, interacts with MinD and FtsZ.

Cell division inhibitor that blocks the formation of polar Z ring septums. Rapidly oscillates between the poles of the cell to destabilize FtsZ filaments that have formed before they mature into polar Z rings. Prevents FtsZ polymerization. The chain is Probable septum site-determining protein MinC from Allorhizobium ampelinum (strain ATCC BAA-846 / DSM 112012 / S4) (Agrobacterium vitis (strain S4)).